Consider the following 271-residue polypeptide: WUSCHEL-related homeobox 6 (271 aa).

A DNA-binding region (homeobox; WUS-type) is located at residues 57–121 (AATLRWNPTP…NHKARERLKR (65 aa)). Residues 118–195 (RLKRRRREGG…TEESDQRASE (78 aa)) form a disordered region. Composition is skewed to basic and acidic residues over residues 132–148 (PHKD…RVDQ) and 180–195 (NEDH…RASE).

Belongs to the WUS homeobox family. Highly expressed in developing ovules. Present in developing primordia and differentiating organs but absent in mature organs.

The protein localises to the nucleus. Its function is as follows. Transcription factor that plays a central role in ovule patterning by regulating cell proliferation of the maternal integuments and differentiation of the maegaspore mother cell (MCC). Involved in AGAMOUS (AG) repression in leaves. The sequence is that of WUSCHEL-related homeobox 6 (WOX6) from Arabidopsis thaliana (Mouse-ear cress).